A 30-amino-acid polypeptide reads, in one-letter code: Trypsin inhibitor 1 (30 aa).

Disulfide bonds link Cys-4-Cys-21, Cys-11-Cys-23, and Cys-17-Cys-29.

This sequence belongs to the protease inhibitor I7 (squash-type serine protease inhibitor) family.

The protein localises to the secreted. Inhibits trypsin. This is Trypsin inhibitor 1 from Momordica charantia (Bitter gourd).